We begin with the raw amino-acid sequence, 440 residues long: Thymidine phosphorylase (440 aa).

The protein belongs to the thymidine/pyrimidine-nucleoside phosphorylase family. In terms of assembly, homodimer.

The enzyme catalyses thymidine + phosphate = 2-deoxy-alpha-D-ribose 1-phosphate + thymine. The protein operates within pyrimidine metabolism; dTMP biosynthesis via salvage pathway; dTMP from thymine: step 1/2. The enzymes which catalyze the reversible phosphorolysis of pyrimidine nucleosides are involved in the degradation of these compounds and in their utilization as carbon and energy sources, or in the rescue of pyrimidine bases for nucleotide synthesis. This is Thymidine phosphorylase from Salmonella heidelberg (strain SL476).